Consider the following 160-residue polypeptide: Ribosomal RNA large subunit methyltransferase H (160 aa).

S-adenosyl-L-methionine-binding positions include leucine 76, glycine 108, and 127–132 (FGALTW).

This sequence belongs to the RNA methyltransferase RlmH family. Homodimer.

The protein localises to the cytoplasm. It catalyses the reaction pseudouridine(1915) in 23S rRNA + S-adenosyl-L-methionine = N(3)-methylpseudouridine(1915) in 23S rRNA + S-adenosyl-L-homocysteine + H(+). Specifically methylates the pseudouridine at position 1915 (m3Psi1915) in 23S rRNA. The polypeptide is Ribosomal RNA large subunit methyltransferase H (Mesorhizobium japonicum (strain LMG 29417 / CECT 9101 / MAFF 303099) (Mesorhizobium loti (strain MAFF 303099))).